The sequence spans 129 residues: uncharacterized protein (129 aa).

3 helical membrane passes run 49 to 69 (LWSL…IVGV), 72 to 92 (FTIF…NLIF), and 101 to 118 (YFNC…NLLQ).

It is found in the membrane. This is an uncharacterized protein from Saccharomyces cerevisiae (strain ATCC 204508 / S288c) (Baker's yeast).